The primary structure comprises 473 residues: Probable glycine dehydrogenase (decarboxylating) subunit 2 (473 aa).

The residue at position 266 (K266) is an N6-(pyridoxal phosphate)lysine.

Belongs to the GcvP family. C-terminal subunit subfamily. As to quaternary structure, the glycine cleavage system is composed of four proteins: P, T, L and H. In this organism, the P 'protein' is a heterodimer of two subunits. Pyridoxal 5'-phosphate is required as a cofactor.

The catalysed reaction is N(6)-[(R)-lipoyl]-L-lysyl-[glycine-cleavage complex H protein] + glycine + H(+) = N(6)-[(R)-S(8)-aminomethyldihydrolipoyl]-L-lysyl-[glycine-cleavage complex H protein] + CO2. Functionally, the glycine cleavage system catalyzes the degradation of glycine. The P protein binds the alpha-amino group of glycine through its pyridoxal phosphate cofactor; CO(2) is released and the remaining methylamine moiety is then transferred to the lipoamide cofactor of the H protein. The chain is Probable glycine dehydrogenase (decarboxylating) subunit 2 from Thermus thermophilus (strain ATCC BAA-163 / DSM 7039 / HB27).